The chain runs to 368 residues: GDP-fucose transporter 1 (368 aa).

A run of 9 helical transmembrane segments spans residues 64 to 84 (LSTI…LVFL), 98 to 118 (LFIT…MTSI), 141 to 161 (VLPV…CLEY), 166 to 186 (FYQV…YIVL), 195 to 215 (TMAC…EVNF), 217 to 237 (WLGI…SIAV), 251 to 271 (LSIY…LVSG), 287 to 307 (FWFY…SVFM), and 332 to 352 (AVVF…LLVI).

The protein belongs to the TPT transporter family. SLC35C subfamily.

The protein localises to the golgi apparatus membrane. It carries out the reaction GMP(out) + GDP-beta-L-fucose(in) = GMP(in) + GDP-beta-L-fucose(out). In terms of biological role, antiporter specific for GDP-l-fucose and depending on the concomitant reverse transport of GMP. Involved in GDP-fucose import from the cytoplasm into the Golgi lumen. The sequence is that of GDP-fucose transporter 1 (slc35c1) from Dictyostelium discoideum (Social amoeba).